The primary structure comprises 1704 residues: Villidin (1704 aa).

WD repeat units follow at residues 82–122 (GHTD…LIKD), 133–173 (KQQK…EQSS), 180–221 (GHED…TPIQ), and 225–271 (THEG…SSQP). 2 disordered regions span residues 439 to 460 (IGNS…DSPF) and 606 to 721 (SVPS…NSST). The span at 442 to 456 (SGSGGGGGDGDGNGG) shows a compositional bias: gly residues. Positions 459-563 (PFITEGIVKQ…WCQSINAYRE (105 aa)) constitute a PH 1 domain. 3 stretches are compositionally biased toward low complexity: residues 613 to 636 (QQQQ…TPTQ), 651 to 701 (SLKS…SSSS), and 709 to 721 (NNST…NSST). 2 PH domains span residues 727 to 828 (DIVI…QNLK) and 871 to 969 (EQPL…AARK). A disordered region spans residues 848–877 (LISSPMSDDESNTNEGGVEEEEEEQPLEGQ). The segment covering 854–873 (SDDESNTNEGGVEEEEEEQP) has biased composition (acidic residues). Gelsolin-like repeat units follow at residues 1025–1119 (KQKI…LGGN), 1138–1241 (IKTT…FANY), 1293–1390 (GRVK…FKTK), 1404–1494 (KKPS…FEST), and 1520–1615 (RFFV…FRAW). Residues 1641–1704 (DYLKEIYTYE…EGIKKELFLF (64 aa)) form the HP domain.

Its subcellular location is the membrane. It localises to the cytoplasm. The protein resides in the cytoskeleton. In terms of biological role, may function as a linker between membranes and the actin cytoskeleton. The polypeptide is Villidin (vilA) (Dictyostelium discoideum (Social amoeba)).